Here is a 104-residue protein sequence, read N- to C-terminus: MMLKPSIDTLLDKVPSKYSLVILEAKRAHELEAGAPATQGFKSEKSTLRALEEIESGNVTIHPDPEGKREAVRRRIEEEKRRKEEEEKKIKEQIAKEKEDGEKI.

The segment at 53–104 (EIESGNVTIHPDPEGKREAVRRRIEEEKRRKEEEEKKIKEQIAKEKEDGEKI) is disordered. Basic and acidic residues predominate over residues 63 to 104 (PDPEGKREAVRRRIEEEKRRKEEEEKKIKEQIAKEKEDGEKI).

It belongs to the RNA polymerase subunit omega family. As to quaternary structure, the RNAP catalytic core consists of 2 alpha, 1 beta, 1 beta' and 1 omega subunit. When a sigma factor is associated with the core the holoenzyme is formed, which can initiate transcription.

The enzyme catalyses RNA(n) + a ribonucleoside 5'-triphosphate = RNA(n+1) + diphosphate. Functionally, promotes RNA polymerase assembly. Latches the N- and C-terminal regions of the beta' subunit thereby facilitating its interaction with the beta and alpha subunits. The polypeptide is DNA-directed RNA polymerase subunit omega (Streptococcus pneumoniae serotype 2 (strain D39 / NCTC 7466)).